We begin with the raw amino-acid sequence, 192 residues long: C-X-C chemokine receptor type 4 (192 aa).

Sulfotyrosine is present on tyrosine 1. The important for chemokine binding and signaling stretch occupies residues 1–11 (YTEDDLGSGDY). Over 1–28 (YTEDDLGSGDYDSMKEPCFREENAHFNR) the chain is Extracellular. O-linked (Xyl...) (chondroitin sulfate) serine glycosylation is present at serine 8. A Sulfotyrosine modification is found at tyrosine 11. A helical transmembrane segment spans residues 29-53 (IFLPTVYSIIFLTGIVGNGLVILVM). Residues 54–67 (GYQKKLRSMTDKYR) lie on the Cytoplasmic side of the membrane. The chain crosses the membrane as a helical span at residues 68–89 (LHLSVADLLFVLTLPFWAVDAV). The tract at residues 84 to 87 (WAVD) is chemokine binding. At 90 to 100 (ANWYFGQFLCK) the chain is on the extracellular side. Cysteine 99 and cysteine 176 are joined by a disulfide. The helical transmembrane segment at 101–120 (AVHVIYTVNLYSSVLILAFI) threads the bilayer. The chemokine binding stretch occupies residues 103–107 (HVIYT). The Cytoplasmic segment spans residues 121–144 (SLDRYLAIVHATNSQRPRKLLAEK). Residues 123–125 (DRY) carry the Important for signaling motif. Positions 125–137 (YLAIVHATNSQRP) are involved in dimerization; when bound to chemokine. A helical membrane pass occupies residues 145–164 (VVYVGVWLPAVLLTIPDLIF). Residues 165–185 (ADIKEADERYICDRFYPSDLW) are Extracellular-facing. Residues 176–180 (CDRFY) are chemokine binding, important for signaling. A helical transmembrane segment spans residues 186-192 (LVVFQFQ).

This sequence belongs to the G-protein coupled receptor 1 family. As to quaternary structure, monomer. Can form homodimers. Interacts with CD164. Interacts with ARRB2; the interaction is dependent on the C-terminal phosphorylation of CXCR4 and allows activation of MAPK1 and MAPK3. Interacts with ARR3; the interaction is dependent on the C-terminal phosphorylation of CXCR4 and modulates calcium mobilization. Interacts with RNF113A; the interaction, enhanced by CXCL12, promotes CXCR4 ubiquitination and subsequent degradation. Interacts (via the cytoplasmic C-terminal) with ITCH (via the WW domains I and II); the interaction, enhanced by CXCL12, promotes CXCR4 ubiquitination and leads to its degradation. Interacts with extracellular ubiquitin. Interacts with DBN1; this interaction is enhanced by antigenic stimulation. Following LPS binding, may form a complex with GDF5, HSP90AA1 and HSPA8. Phosphorylated on agonist stimulation. Rapidly phosphorylated on serine and threonine residues in the C-terminal. Post-translationally, ubiquitinated after ligand binding, leading to its degradation. Ubiquitinated by ITCH at the cell membrane on agonist stimulation. The ubiquitin-dependent mechanism, endosomal sorting complex required for transport (ESCRT), then targets CXCR4 for lysosomal degradation. This process is dependent also on prior Ser-/Thr-phosphorylation in the C-terminal of CXCR4. Also binding of ARRB1 to STAM negatively regulates CXCR4 sorting to lysosomes though modulating ubiquitination of SFR5S. In terms of processing, sulfation is required for efficient binding of CXCL12/SDF-1alpha and promotes its dimerization. O- and N-glycosylated. N-glycosylation can mask coreceptor function. The O-glycosylation chondroitin sulfate attachment does not affect interaction with CXCL12/SDF-1alpha nor its coreceptor activity.

It localises to the cell membrane. Its subcellular location is the cell junction. The protein localises to the early endosome. It is found in the late endosome. The protein resides in the lysosome. Its function is as follows. Receptor for the C-X-C chemokine CXCL12/SDF-1 that transduces a signal by increasing intracellular calcium ion levels and enhancing MAPK1/MAPK3 activation. Involved in the AKT signaling cascade. Plays a role in regulation of cell migration, e.g. during wound healing. Acts as a receptor for extracellular ubiquitin; leading to enhanced intracellular calcium ions and reduced cellular cAMP levels. Binds bacterial lipopolysaccharide (LPS) et mediates LPS-induced inflammatory response, including TNF secretion by monocytes. Involved in hematopoiesis and in cardiac ventricular septum formation. Also plays an essential role in vascularization of the gastrointestinal tract, probably by regulating vascular branching and/or remodeling processes in endothelial cells. Involved in cerebellar development. In the CNS, could mediate hippocampal-neuron survival. The sequence is that of C-X-C chemokine receptor type 4 (CXCR4) from Ovis aries (Sheep).